The sequence spans 287 residues: Ethylene-inducing xylanase 3 (287 aa).

Residues 1–19 form the signal peptide; sequence MVCFSSLFVAASAIAVVFA. Residues 31–219 enclose the GH11 domain; it reads QSTPSSQGTH…SSGSARINVA (189 aa). Residue glutamate 115 is the Nucleophile of the active site. Glutamate 206 functions as the Proton donor in the catalytic mechanism. One can recognise a CBM1 domain in the interval 252 to 287; the sequence is SCAARWGQCGGSGWNGATCCSAGTCQAQNQWYSQCL.

The protein belongs to the glycosyl hydrolase 11 (cellulase G) family.

The catalysed reaction is Endohydrolysis of (1-&gt;4)-beta-D-xylosidic linkages in xylans.. The protein operates within glycan degradation; xylan degradation. In terms of biological role, endo-1,4-beta-xylanase involved in the hydrolysis of xylan, a major structural heterogeneous polysaccharide found in plant biomass representing the second most abundant polysaccharide in the biosphere, after cellulose. Exhibits immunity-inducing activity and induces cell death in Nicotiana benthamiana. In Verticillium longisporum (Verticillium dahliae var. longisporum), this protein is Ethylene-inducing xylanase 3.